Reading from the N-terminus, the 303-residue chain is Bifunctional protein FolD (303 aa).

Residues 169–171 (GRG), Thr-196, and Val-237 each bind NADP(+).

Belongs to the tetrahydrofolate dehydrogenase/cyclohydrolase family. As to quaternary structure, homodimer.

It catalyses the reaction (6R)-5,10-methylene-5,6,7,8-tetrahydrofolate + NADP(+) = (6R)-5,10-methenyltetrahydrofolate + NADPH. The catalysed reaction is (6R)-5,10-methenyltetrahydrofolate + H2O = (6R)-10-formyltetrahydrofolate + H(+). It functions in the pathway one-carbon metabolism; tetrahydrofolate interconversion. Its function is as follows. Catalyzes the oxidation of 5,10-methylenetetrahydrofolate to 5,10-methenyltetrahydrofolate and then the hydrolysis of 5,10-methenyltetrahydrofolate to 10-formyltetrahydrofolate. The protein is Bifunctional protein FolD of Micrococcus luteus (strain ATCC 4698 / DSM 20030 / JCM 1464 / CCM 169 / CCUG 5858 / IAM 1056 / NBRC 3333 / NCIMB 9278 / NCTC 2665 / VKM Ac-2230) (Micrococcus lysodeikticus).